We begin with the raw amino-acid sequence, 143 residues long: Large ribosomal subunit protein uL11 (143 aa).

This sequence belongs to the universal ribosomal protein uL11 family. Part of the ribosomal stalk of the 50S ribosomal subunit. Interacts with L10 and the large rRNA to form the base of the stalk. L10 forms an elongated spine to which L12 dimers bind in a sequential fashion forming a multimeric L10(L12)X complex. In terms of processing, one or more lysine residues are methylated.

Functionally, forms part of the ribosomal stalk which helps the ribosome interact with GTP-bound translation factors. The chain is Large ribosomal subunit protein uL11 from Alkalilimnicola ehrlichii (strain ATCC BAA-1101 / DSM 17681 / MLHE-1).